The following is a 407-amino-acid chain: Protein ATC1/LIC4 (407 aa).

The protein localises to the cytoplasm. It localises to the nucleus. Functionally, involved in cation homeostasis and in the regulation of the cation stress signaling cascades. The polypeptide is Protein ATC1/LIC4 (ATC1) (Eremothecium gossypii (strain ATCC 10895 / CBS 109.51 / FGSC 9923 / NRRL Y-1056) (Yeast)).